The chain runs to 288 residues: Phosphatidylglycerol--prolipoprotein diacylglyceryl transferase (288 aa).

4 helical membrane-spanning segments follow: residues 8 to 28 (IGPIELHYYGLMYAIAFFVGI), 49 to 69 (AFVAIISGLIGGRLYYILFNL), 79 to 99 (ILAVWHGGMAIHGGILGGIAG), and 109 to 129 (INPLILGDFAAGPFILGQAIG). Residue Arg-130 participates in a 1,2-diacyl-sn-glycero-3-phospho-(1'-sn-glycerol) binding. The next 3 membrane-spanning stretches (helical) occupy residues 203-223 (PAMLYELILNLIGFFIIWFIL), 232-252 (GYMWWWYIIIYSINRIIVSFF), and 259-279 (FFNFRAPHVISIILIAVSIFF).

Belongs to the Lgt family.

It is found in the cell inner membrane. The catalysed reaction is L-cysteinyl-[prolipoprotein] + a 1,2-diacyl-sn-glycero-3-phospho-(1'-sn-glycerol) = an S-1,2-diacyl-sn-glyceryl-L-cysteinyl-[prolipoprotein] + sn-glycerol 1-phosphate + H(+). It participates in protein modification; lipoprotein biosynthesis (diacylglyceryl transfer). Its function is as follows. Catalyzes the transfer of the diacylglyceryl group from phosphatidylglycerol to the sulfhydryl group of the N-terminal cysteine of a prolipoprotein, the first step in the formation of mature lipoproteins. In Fusobacterium nucleatum subsp. nucleatum (strain ATCC 25586 / DSM 15643 / BCRC 10681 / CIP 101130 / JCM 8532 / KCTC 2640 / LMG 13131 / VPI 4355), this protein is Phosphatidylglycerol--prolipoprotein diacylglyceryl transferase.